The chain runs to 282 residues: Putative hydrolase BceJ2315_61450 (282 aa).

Residues Glu-124, Glu-126, and Asp-155 each contribute to the Mg(2+) site.

Belongs to the FAH family. The cofactor is Mg(2+).

The protein is Putative hydrolase BceJ2315_61450 of Burkholderia cenocepacia (strain ATCC BAA-245 / DSM 16553 / LMG 16656 / NCTC 13227 / J2315 / CF5610) (Burkholderia cepacia (strain J2315)).